The following is a 198-amino-acid chain: Transcription factor FapR (198 aa).

Positions 102–167 constitute a MaoC-like domain; that stretch reads TRIARGHHLF…HGRTIVEVNS (66 aa).

This sequence belongs to the FapR family.

Its function is as follows. Transcriptional factor involved in regulation of membrane lipid biosynthesis by repressing genes involved in fatty acid and phospholipid metabolism. This is Transcription factor FapR from Geobacillus kaustophilus (strain HTA426).